Consider the following 518-residue polypeptide: Mitochondrial distribution and morphology protein 34 (518 aa).

Positions 1 to 198 constitute an SMP-LTD domain; that stretch reads MSFKVNWNTL…LPTLIHRLSL (198 aa). Disordered stretches follow at residues 335–369 and 491–518; these read SRPK…SEMS and IPDV…PYQV. Over residues 336–350 the composition is skewed to basic residues; sequence RPKRRVIKLGSKKSS. The span at 492-506 shows a compositional bias: basic and acidic residues; the sequence is PDVKSHPGTGRKLDT.

Belongs to the MDM34 family. Component of the ER-mitochondria encounter structure (ERMES) or MDM complex, composed of MMM1, MDM10, MDM12 and MDM34.

The protein resides in the mitochondrion outer membrane. Functionally, component of the ERMES/MDM complex, which serves as a molecular tether to connect the endoplasmic reticulum (ER) and mitochondria. Components of this complex are involved in the control of mitochondrial shape and protein biogenesis, and function in nonvesicular lipid trafficking between the ER and mitochondria. MDM34 is required for the interaction of the ER-resident membrane protein MMM1 and the outer mitochondrial membrane-resident beta-barrel protein MDM10. The sequence is that of Mitochondrial distribution and morphology protein 34 from Meyerozyma guilliermondii (strain ATCC 6260 / CBS 566 / DSM 6381 / JCM 1539 / NBRC 10279 / NRRL Y-324) (Yeast).